The chain runs to 370 residues: A-type ATP synthase subunit C (370 aa).

Belongs to the V-ATPase V0D/AC39 subunit family. In terms of assembly, has multiple subunits with at least A(3), B(3), C, D, E, F, H, I and proteolipid K(x).

It localises to the cell membrane. In terms of biological role, component of the A-type ATP synthase that produces ATP from ADP in the presence of a proton gradient across the membrane. In Pyrococcus furiosus (strain ATCC 43587 / DSM 3638 / JCM 8422 / Vc1), this protein is A-type ATP synthase subunit C.